Reading from the N-terminus, the 59-residue chain is MAEVRVGKNETLDSALRRFKRTCQRAGVFAEARKHEHYEKPSVKRKKKSEAARRRKRSF.

A disordered region spans residues 34–59; that stretch reads KHEHYEKPSVKRKKKSEAARRRKRSF. Basic residues predominate over residues 43 to 59; the sequence is VKRKKKSEAARRRKRSF.

This sequence belongs to the bacterial ribosomal protein bS21 family.

The chain is Small ribosomal subunit protein bS21 from Desulforudis audaxviator (strain MP104C).